A 446-amino-acid polypeptide reads, in one-letter code: Phosphoglucosamine mutase (446 aa).

The Phosphoserine intermediate role is filled by S100. Mg(2+)-binding residues include S100, D239, D241, and D243. S100 carries the phosphoserine modification.

It belongs to the phosphohexose mutase family. Mg(2+) serves as cofactor. Post-translationally, activated by phosphorylation.

It catalyses the reaction alpha-D-glucosamine 1-phosphate = D-glucosamine 6-phosphate. Its function is as follows. Catalyzes the conversion of glucosamine-6-phosphate to glucosamine-1-phosphate. This is Phosphoglucosamine mutase from Shouchella clausii (strain KSM-K16) (Alkalihalobacillus clausii).